The sequence spans 509 residues: 2-isopropylmalate synthase (509 aa).

Residues 5–267 (IQIFDTTLRD…QTALNLEETK (263 aa)) enclose the Pyruvate carboxyltransferase domain. D14, H202, H204, and N238 together coordinate Mn(2+). The regulatory domain stretch occupies residues 391-509 (KLETLQLQYV…AAENVEKVGN (119 aa)).

The protein belongs to the alpha-IPM synthase/homocitrate synthase family. LeuA type 1 subfamily. Homodimer. Mn(2+) serves as cofactor.

Its subcellular location is the cytoplasm. It catalyses the reaction 3-methyl-2-oxobutanoate + acetyl-CoA + H2O = (2S)-2-isopropylmalate + CoA + H(+). It participates in amino-acid biosynthesis; L-leucine biosynthesis; L-leucine from 3-methyl-2-oxobutanoate: step 1/4. Functionally, catalyzes the condensation of the acetyl group of acetyl-CoA with 3-methyl-2-oxobutanoate (2-ketoisovalerate) to form 3-carboxy-3-hydroxy-4-methylpentanoate (2-isopropylmalate). This chain is 2-isopropylmalate synthase, found in Staphylococcus aureus (strain MW2).